The sequence spans 343 residues: 3-oxopimeloyl-[acyl-carrier-protein] synthase (343 aa).

Residues Cys-132 and His-272 contribute to the active site. The interval Gln-273 to Arg-277 is ACP-binding. Asn-302 is an active-site residue.

Belongs to the thiolase-like superfamily. BioZ family.

The enzyme catalyses malonyl-[ACP] + an acyl-CoA + H(+) = a 3-oxoacyl-[ACP] + CO2 + CoA. It carries out the reaction glutaryl-CoA + malonyl-[ACP] + H(+) = 3-oxo-6-carboxyhexanoyl-[ACP] + CO2 + CoA. It functions in the pathway cofactor biosynthesis; biotin biosynthesis. Involved in the formation of the biotin precursor pimeloyl-ACP. Catalyzes the condensation of glutaryl-CoA, an intermediate in lysine degradation, with malonyl-ACP to produce 3-oxopimeloyl-ACP. This chain is 3-oxopimeloyl-[acyl-carrier-protein] synthase, found in Rhodothermus marinus (strain ATCC 43812 / DSM 4252 / R-10) (Rhodothermus obamensis).